The chain runs to 406 residues: ESX-5 secretion system protein EccE5 (406 aa).

2 helical membrane-spanning segments follow: residues 9–29 and 43–63; these read LALS…ILAV and VAWW…VVSY.

Belongs to the EccE family. As to quaternary structure, part of the ESX-5 / type VII secretion system (T7SS), which is composed of cytosolic and membrane components. The ESX-5 membrane complex is composed of EccB5, EccC5, EccD5 and EccE5.

The protein localises to the cell inner membrane. In terms of biological role, part of the ESX-5 specialized secretion system, which is responsible for the secretion of EsxN and a number of PE_PGRS and PPE proteins, including PPE41. The polypeptide is ESX-5 secretion system protein EccE5 (Mycobacterium tuberculosis (strain ATCC 25618 / H37Rv)).